The chain runs to 26 residues: Conotoxin reg6(gamma) (26 aa).

Residues 1 to 12 (RVLEPGXEDPDV) show a composition bias toward acidic residues. A disordered region spans residues 1-26 (RVLEPGXEDPDVGEPAGEYEHHLLEX). At Glu-4 the chain carries 4-carboxyglutamate. Pro-5 carries the 4-hydroxyproline modification. Glu-8 is modified (4-carboxyglutamate). Pro-10 is modified (4-hydroxyproline). Residue Glu-14 is modified to 4-carboxyglutamate. Pro-15 bears the 4-hydroxyproline mark. 3 positions are modified to 4-carboxyglutamate: Glu-18, Glu-20, and Glu-25.

Expressed by the venom duct.

It localises to the secreted. The sequence is that of Conotoxin reg6(gamma) from Conus regius (Crown cone).